A 465-amino-acid chain; its full sequence is Methylenetetrahydrofolate--tRNA-(uracil-5-)-methyltransferase TrmFO (465 aa).

3–8 (GAGLAG) provides a ligand contact to FAD.

Belongs to the MnmG family. TrmFO subfamily. The cofactor is FAD.

The protein localises to the cytoplasm. The catalysed reaction is uridine(54) in tRNA + (6R)-5,10-methylene-5,6,7,8-tetrahydrofolate + NADH + H(+) = 5-methyluridine(54) in tRNA + (6S)-5,6,7,8-tetrahydrofolate + NAD(+). The enzyme catalyses uridine(54) in tRNA + (6R)-5,10-methylene-5,6,7,8-tetrahydrofolate + NADPH + H(+) = 5-methyluridine(54) in tRNA + (6S)-5,6,7,8-tetrahydrofolate + NADP(+). Functionally, catalyzes the folate-dependent formation of 5-methyl-uridine at position 54 (M-5-U54) in all tRNAs. In Bradyrhizobium sp. (strain ORS 278), this protein is Methylenetetrahydrofolate--tRNA-(uracil-5-)-methyltransferase TrmFO.